Reading from the N-terminus, the 620-residue chain is 1-deoxy-D-xylulose-5-phosphate synthase (620 aa).

Thiamine diphosphate is bound by residues histidine 80 and 121–123 (GHS). Aspartate 152 is a Mg(2+) binding site. Residues 153 to 154 (GA), asparagine 181, tyrosine 288, and glutamate 370 each bind thiamine diphosphate. Asparagine 181 is a Mg(2+) binding site.

The protein belongs to the transketolase family. DXPS subfamily. Homodimer. Mg(2+) is required as a cofactor. Thiamine diphosphate serves as cofactor.

It catalyses the reaction D-glyceraldehyde 3-phosphate + pyruvate + H(+) = 1-deoxy-D-xylulose 5-phosphate + CO2. It functions in the pathway metabolic intermediate biosynthesis; 1-deoxy-D-xylulose 5-phosphate biosynthesis; 1-deoxy-D-xylulose 5-phosphate from D-glyceraldehyde 3-phosphate and pyruvate: step 1/1. Its function is as follows. Catalyzes the acyloin condensation reaction between C atoms 2 and 3 of pyruvate and glyceraldehyde 3-phosphate to yield 1-deoxy-D-xylulose-5-phosphate (DXP). This Shigella sonnei (strain Ss046) protein is 1-deoxy-D-xylulose-5-phosphate synthase.